The primary structure comprises 1405 residues: DNA-directed RNA polymerase subunit beta' (1405 aa).

Residues cysteine 70, cysteine 72, cysteine 85, and cysteine 88 each contribute to the Zn(2+) site. Mg(2+)-binding residues include aspartate 460, aspartate 462, and aspartate 464. Residues cysteine 814, cysteine 888, cysteine 895, and cysteine 898 each coordinate Zn(2+).

The protein belongs to the RNA polymerase beta' chain family. The RNAP catalytic core consists of 2 alpha, 1 beta, 1 beta' and 1 omega subunit. When a sigma factor is associated with the core the holoenzyme is formed, which can initiate transcription. Mg(2+) serves as cofactor. Requires Zn(2+) as cofactor.

The catalysed reaction is RNA(n) + a ribonucleoside 5'-triphosphate = RNA(n+1) + diphosphate. Its function is as follows. DNA-dependent RNA polymerase catalyzes the transcription of DNA into RNA using the four ribonucleoside triphosphates as substrates. In Shewanella woodyi (strain ATCC 51908 / MS32), this protein is DNA-directed RNA polymerase subunit beta'.